Here is a 98-residue protein sequence, read N- to C-terminus: NADH-ubiquinone oxidoreductase chain 4L (98 aa).

3 consecutive transmembrane segments (helical) span residues 1–21, 29–49, and 61–81; these read MSLVYMNIMTAFMVSLAGLLM, SLLCLEGMMLSLFVLATLTIL, and IILLVFAACEAALGLSLLVMV.

This sequence belongs to the complex I subunit 4L family. Core subunit of respiratory chain NADH dehydrogenase (Complex I) which is composed of 45 different subunits.

It localises to the mitochondrion inner membrane. It carries out the reaction a ubiquinone + NADH + 5 H(+)(in) = a ubiquinol + NAD(+) + 4 H(+)(out). Core subunit of the mitochondrial membrane respiratory chain NADH dehydrogenase (Complex I) which catalyzes electron transfer from NADH through the respiratory chain, using ubiquinone as an electron acceptor. Part of the enzyme membrane arm which is embedded in the lipid bilayer and involved in proton translocation. In Muntiacus feae (Fea's muntjac), this protein is NADH-ubiquinone oxidoreductase chain 4L (MT-ND4L).